A 518-amino-acid polypeptide reads, in one-letter code: Protein translocase subunit SecD (518 aa).

6 consecutive transmembrane segments (helical) span residues 9–29 (IFLS…NFMQ), 361–381 (LIGF…LGLF), 384–404 (IALS…QATL), 406–426 (LPGI…NVLI), 452–474 (FATI…IFGV), and 486–506 (IGII…IDIW).

The protein belongs to the SecD/SecF family. SecD subfamily. Forms a complex with SecF. Part of the essential Sec protein translocation apparatus which comprises SecA, SecYEG and auxiliary proteins SecDF-YajC and YidC.

The protein localises to the cell inner membrane. Functionally, part of the Sec protein translocase complex. Interacts with the SecYEG preprotein conducting channel. SecDF uses the proton motive force (PMF) to complete protein translocation after the ATP-dependent function of SecA. This Rickettsia felis (strain ATCC VR-1525 / URRWXCal2) (Rickettsia azadi) protein is Protein translocase subunit SecD.